The sequence spans 31 residues: Nemertide alpha-6 (31 aa).

3 cysteine pairs are disulfide-bonded: Cys-2–Cys-16, Cys-9–Cys-20, and Cys-15–Cys-26. Residues Pro-28 and Pro-29 each carry the 4-hydroxyproline modification.

Belongs to the nemertide family. Confined to the epidermis and to the mucus layer.

It is found in the secreted. Functionally, highly potent toxin against both insect and some mammalian sodium channels (Nav). It potently inhibits inactivation of insect sodium channels of B.germanica (BgNav1) (EC(50)=2.6 nM) and also delays the inactivation of mammalian Nav with potent activity on Nav1.1/SCN1A (hNav1.1/SCN1A; EC(50)=7.9 nM, rNav1.2/SCN2A; EC(50)=24.3 nM, rNav1.3/SCN3A; EC(50)=105.6 nM, rNav1.4/SCN4A; EC(50)=46.4 nM, hNav1.5/SCN5A; EC(50)=215.2 nM, mNav1.6/SCN8A; EC(50)=36.3 nM, hNav1.9/SCN9A; EC(50)=97.2 nM). 1 uM is enough to completely inhibits the inactivation, resulting in sustained non-inactivating currents. In addition, the toxin significantly enhances the recovery from inactivation, and the open state is not required for the toxin to interact with the channel. In vivo, injection into brine shrimp (Artemia salina) stops movement or causes death after 24 hours (EC(50)=2.8 uM). The sequence is that of Nemertide alpha-6 from Lineus sanguineus (Ribbon worm).